Here is a 224-residue protein sequence, read N- to C-terminus: UPF0758 protein Hhal_2301 (224 aa).

An MPN domain is found at Thr102 to Leu224. Residues His173, His175, and Asp186 each contribute to the Zn(2+) site. The JAMM motif motif lies at His173–Asp186.

Belongs to the UPF0758 family.

This Halorhodospira halophila (strain DSM 244 / SL1) (Ectothiorhodospira halophila (strain DSM 244 / SL1)) protein is UPF0758 protein Hhal_2301.